The chain runs to 975 residues: Leucine-zipper-like transcriptional regulator 1 homolog (975 aa).

Positions 16–32 (RGGGGGGCGGGGAGGSA) are enriched in gly residues. 2 disordered regions span residues 16–41 (RGGG…TSGS) and 158–186 (MSSS…SCSS). The segment covering 174–186 (ASSSHPPGSSCSS) has biased composition (low complexity). 6 Kelch repeats span residues 263-312 (AMFV…VAGS), 314-369 (MFIF…VYDN), 370-417 (KMWI…PVAV), 421-467 (AMYV…PSRR), 478-524 (FLYV…FHAS), and 530-581 (AMYI…FIVG). 2 consecutive BTB domains span residues 574 to 670 (CDIQ…DLKD) and 801 to 870 (CDIS…KMPP).

Belongs to the LZTR1 family. As to quaternary structure, component of some BCR (BTB-CUL3-RBX1) E3 ubiquitin-protein ligase complex. Expressed in Rdl-expressing neurons of the mushroom body, the neurons projecting to the LC9 optic glomerulus and in a neuronal cluster near the subesophageal ganglion (at protein level).

It functions in the pathway protein modification; protein ubiquitination. In terms of biological role, inhibitor of Ras signaling. Acts as a substrate-specific adapter of a BCR (BTB-CUL3-RBX1) E3 ubiquitin-protein ligase complex that mediates ubiquitination of Ras. Together with Nf1, plays an important role for normal sleep behavior, mainly during the night. Might affect sleep by modulating GABA signaling in Rdl-expressing neurons. Might play a role in the regulation of brain glycogen metabolism and organismal levels of triglycerides. The protein is Leucine-zipper-like transcriptional regulator 1 homolog of Drosophila melanogaster (Fruit fly).